We begin with the raw amino-acid sequence, 210 residues long: Thymidylate kinase (210 aa).

10-17 (GPEGAGKS) contacts ATP.

It belongs to the thymidylate kinase family.

It carries out the reaction dTMP + ATP = dTDP + ADP. Phosphorylation of dTMP to form dTDP in both de novo and salvage pathways of dTTP synthesis. The chain is Thymidylate kinase from Pseudomonas fluorescens (strain Pf0-1).